We begin with the raw amino-acid sequence, 323 residues long: UDP-N-acetylenolpyruvoylglucosamine reductase (323 aa).

Positions 52–217 constitute an FAD-binding PCMH-type domain; the sequence is KSGGAADWLF…VSARLQGEPG (166 aa). Residue arginine 197 is part of the active site. A disordered region spans residues 234 to 253; the sequence is EQSQPVRTKTGGSTFKNPPG. A compositionally biased stretch (polar residues) spans 235–249; it reads QSQPVRTKTGGSTFK. The Proton donor role is filled by serine 246. Glutamate 316 is a catalytic residue.

Belongs to the MurB family. Requires FAD as cofactor.

It localises to the cytoplasm. The catalysed reaction is UDP-N-acetyl-alpha-D-muramate + NADP(+) = UDP-N-acetyl-3-O-(1-carboxyvinyl)-alpha-D-glucosamine + NADPH + H(+). It participates in cell wall biogenesis; peptidoglycan biosynthesis. Its function is as follows. Cell wall formation. The protein is UDP-N-acetylenolpyruvoylglucosamine reductase of Erythrobacter litoralis (strain HTCC2594).